The sequence spans 132 residues: Pre-histone-like nucleoprotein (132 aa).

Positions A2–G23 are excised as a propeptide. Residues R124 to K132 carry the Nuclear localization signal motif.

Belongs to the adenoviridae histone-like nucleoprotein family. In terms of assembly, interacts with the core-capsid bridging protein; this interaction bridges the virus core to the capsid. Interacts with host NPM1; this interaction might play a role in placing the pre-histone-like nucleoprotein on the viral DNA or regulating viral gene expression. Interacts with host HMGB1; this interaction inhibits host immune response. Post-translationally, cleaved near the N-terminus by the viral protease during virion maturation to form the mature protein.

It localises to the virion. The protein resides in the host nucleus. The protein localises to the host nucleolus. Plays a role in the inhibition of host immune response within the nucleus. Interacts with cellular nucleosomes and immobilizes the host immune danger signal HMGB1 on chromatin. In turn, prevents HMGB1 release out of the cell and thus decreases inflammation. Also plays a role in the wrapping and condensation of the viral DNA. May also promote viral genome import into the nucleus. The chain is Pre-histone-like nucleoprotein from Canine adenovirus serotype 1 (strain RI261) (CAdV-1).